A 569-amino-acid chain; its full sequence is Isochorismate synthase 1, chloroplastic (569 aa).

A chloroplast-targeting transit peptide spans 1–45; sequence MASLQFSSQFLGSNTKTHSSIISISRSYSPTPFTRFSRKKYESCS.

Belongs to the isochorismate synthase family. Monomer. It depends on Mg(2+) as a cofactor. As to expression, leaves.

It is found in the plastid. The protein resides in the chloroplast. It carries out the reaction chorismate = isochorismate. Its pathway is siderophore biosynthesis; salicylate biosynthesis. Isochorismate synthase involved in the synthesis of salicylic acid (SA) required for both local and systemic acquired resistance (LAR and SAR) while SA synthesized through the phenylalanine ammonium lyase (PAL) pathway seems to potentiate plant cell death. Also involved in phylloquinone (vitamin K1) synthesis. Has no isochorismate pyruvate lyase (IPL) activity. The sequence is that of Isochorismate synthase 1, chloroplastic (ICS1) from Arabidopsis thaliana (Mouse-ear cress).